The sequence spans 260 residues: uncharacterized protein (260 aa).

An ABC transporter domain is found at 4-231 (LHVDHVTHTY…PKELAAMLPF (228 aa)). 40–47 (GPSGCGKT) is an ATP binding site.

It belongs to the ABC transporter superfamily.

This is an uncharacterized protein from Bacillus subtilis (strain 168).